A 526-amino-acid polypeptide reads, in one-letter code: Phosphoenolpyruvate carboxykinase (ATP) 2 (526 aa).

Residues Arg55, Tyr190, and Lys196 each coordinate substrate. ATP-binding positions include Lys196, His215, and 231–239; that span reads GLSGTGKTT. Positions 196 and 215 each coordinate Mn(2+). Asp252 serves as a coordination point for Mn(2+). ATP is bound by residues Glu280, Arg317, and Thr442. Arg317 is a substrate binding site.

It belongs to the phosphoenolpyruvate carboxykinase (ATP) family. Mn(2+) serves as cofactor.

The protein localises to the cytoplasm. It catalyses the reaction oxaloacetate + ATP = phosphoenolpyruvate + ADP + CO2. It participates in carbohydrate biosynthesis; gluconeogenesis. Its function is as follows. Involved in the gluconeogenesis. Catalyzes the conversion of oxaloacetate (OAA) to phosphoenolpyruvate (PEP) through direct phosphoryl transfer between the nucleoside triphosphate and OAA. This chain is Phosphoenolpyruvate carboxykinase (ATP) 2, found in Moorella thermoacetica (strain ATCC 39073 / JCM 9320).